Reading from the N-terminus, the 883-residue chain is Protein P (883 aa).

The tract at residues M1–Q183 is terminal protein domain (TP). Residues L184–L386 form a spacer region. The tract at residues R298 to S344 is disordered. Positions D387–Q728 are polymerase/reverse transcriptase domain (RT). The Reverse transcriptase domain occupies D397–I638. D469, D589, and D590 together coordinate Mg(2+).

It belongs to the hepadnaviridae P protein family.

It catalyses the reaction DNA(n) + a 2'-deoxyribonucleoside 5'-triphosphate = DNA(n+1) + diphosphate. The catalysed reaction is Endonucleolytic cleavage to 5'-phosphomonoester.. Its activity is regulated as follows. Activated by host HSP70 and HSP40 in vitro to be able to bind the epsilon loop of the pgRNA. Because deletion of the RNase H region renders the protein partly chaperone-independent, the chaperones may be needed indirectly to relieve occlusion of the RNA-binding site by this domain. Inhibited by several reverse-transcriptase inhibitors: Lamivudine, Adefovir and Entecavir. Functionally, multifunctional enzyme that converts the viral RNA genome into dsDNA in viral cytoplasmic capsids. This enzyme displays a DNA polymerase activity that can copy either DNA or RNA templates, and a ribonuclease H (RNase H) activity that cleaves the RNA strand of RNA-DNA heteroduplexes in a partially processive 3'- to 5'-endonucleasic mode. Neo-synthesized pregenomic RNA (pgRNA) are encapsidated together with the P protein, and reverse-transcribed inside the nucleocapsid. Initiation of reverse-transcription occurs first by binding the epsilon loop on the pgRNA genome, and is initiated by protein priming, thereby the 5'-end of (-)DNA is covalently linked to P protein. Partial (+)DNA is synthesized from the (-)DNA template and generates the relaxed circular DNA (RC-DNA) genome. After budding and infection, the RC-DNA migrates in the nucleus, and is converted into a plasmid-like covalently closed circular DNA (cccDNA). The activity of P protein does not seem to be necessary for cccDNA generation, and is presumably released from (+)DNA by host nuclear DNA repair machinery. This is Protein P from Woodchuck hepatitis B virus (isolate 2) (WHV).